Here is a 115-residue protein sequence, read N- to C-terminus: Promotilin (115 aa).

An N-terminal signal peptide occupies residues methionine 1–alanine 25. The interval glutamate 40–asparagine 74 is disordered.

Belongs to the motilin family.

The protein resides in the secreted. In terms of biological role, plays an important role in the regulation of interdigestive gastrointestinal motility and indirectly causes rhythmic contraction of duodenal and colonic smooth muscle. This Macaca mulatta (Rhesus macaque) protein is Promotilin (MLN).